A 208-amino-acid polypeptide reads, in one-letter code: N-(5'-phosphoribosyl)anthranilate isomerase (208 aa).

This sequence belongs to the TrpF family.

The enzyme catalyses N-(5-phospho-beta-D-ribosyl)anthranilate = 1-(2-carboxyphenylamino)-1-deoxy-D-ribulose 5-phosphate. The protein operates within amino-acid biosynthesis; L-tryptophan biosynthesis; L-tryptophan from chorismate: step 3/5. This is N-(5'-phosphoribosyl)anthranilate isomerase from Methanococcus maripaludis (strain C5 / ATCC BAA-1333).